The following is a 473-amino-acid chain: Vasculin-like protein 1 (473 aa).

Residues Ser-14–Thr-25 show a composition bias toward polar residues. The interval Ser-14–Asn-55 is disordered. The span at Phe-26–Gly-38 shows a compositional bias: basic and acidic residues. A phosphoserine mark is found at Ser-49 and Ser-76. Disordered stretches follow at residues Gly-88–Cys-127 and Asp-155–Pro-189. The segment covering Ser-103 to Gly-112 has biased composition (polar residues). Residues Asn-113–Lys-125 are compositionally biased toward basic residues. Ser-199 bears the Phosphoserine mark. 2 disordered regions span residues Leu-235 to Ser-267 and Leu-281 to Thr-316. Ser-289 is subject to Phosphoserine. Positions Glu-292 to Thr-309 are enriched in low complexity. Thr-298 carries the phosphothreonine modification. Position 381 is a phosphoserine (Ser-381). The interval Glu-453–Lys-473 is disordered.

This sequence belongs to the vasculin family.

Its subcellular location is the nucleus. Possible transcription factor. This Mus musculus (Mouse) protein is Vasculin-like protein 1 (Gpbp1l1).